The primary structure comprises 62 residues: Large ribosomal subunit protein bL28 (62 aa).

The disordered stretch occupies residues 1–28 (MARVCTITGRKARSGNSRSHAMNATKRK).

The protein belongs to the bacterial ribosomal protein bL28 family.

This is Large ribosomal subunit protein bL28 from Bacillus anthracis (strain CDC 684 / NRRL 3495).